Here is a 70-residue protein sequence, read N- to C-terminus: Large ribosomal subunit protein bL31 (70 aa).

Residues cysteine 16, cysteine 18, cysteine 37, and cysteine 40 each contribute to the Zn(2+) site.

Belongs to the bacterial ribosomal protein bL31 family. Type A subfamily. In terms of assembly, part of the 50S ribosomal subunit. It depends on Zn(2+) as a cofactor.

Binds the 23S rRNA. In Haemophilus influenzae (strain 86-028NP), this protein is Large ribosomal subunit protein bL31.